The primary structure comprises 246 residues: Uridylate kinase (246 aa).

Residue 16–19 participates in ATP binding; that stretch reads KFSG. G58 contacts UMP. ATP is bound by residues G59 and R63. UMP is bound by residues D78 and 139–146; that span reads TGNPFFTT. 3 residues coordinate ATP: T166, Y172, and D175.

This sequence belongs to the UMP kinase family. In terms of assembly, homohexamer.

The protein resides in the cytoplasm. It catalyses the reaction UMP + ATP = UDP + ADP. Its pathway is pyrimidine metabolism; CTP biosynthesis via de novo pathway; UDP from UMP (UMPK route): step 1/1. Its activity is regulated as follows. Inhibited by UTP. Its function is as follows. Catalyzes the reversible phosphorylation of UMP to UDP. This is Uridylate kinase from Legionella pneumophila (strain Corby).